Consider the following 560-residue polypeptide: Protein tweety homolog 3 (560 aa).

The Extracellular segment spans residues 1–43 (MAAVVNYSPPWWVNLFHRLPHFNLQFQQTSSDFRPDDSDYQKA). The chain crosses the membrane as a helical span at residues 44-64 (VLLLGAAALVCLALDLLFLLF). The Cytoplasmic segment spans residues 65–87 (YSFWLCCCRRKNHDSPNADCCCT). The chain crosses the membrane as a helical span at residues 88-108 (AWCVIIATLVCSAGIAVGFYG). The Extracellular segment spans residues 109-212 (NGETCDGVTR…TEQYDWYRWL (104 aa)). The Ca(2+) site is built by glutamate 111 and aspartate 114. Residues asparagine 127 and asparagine 145 are each glycosylated (N-linked (GlcNAc...) asparagine). A helical transmembrane segment spans residues 213-233 (GYLGLLLFDVIICLLVLVGLI). At 234-238 (RNSRS) the chain is on the cytoplasmic side. The chain crosses the membrane as a helical span at residues 239–259 (ILIGVCFLGVLTLVISWASLG). The Extracellular segment spans residues 260–387 (LEFSFAVGAS…LTGLCYDGVE (128 aa)). Disulfide bonds link cysteine 272–cysteine 382 and cysteine 300–cysteine 367. Asparagine 352 carries an N-linked (GlcNAc...) asparagine glycan. Residues 388–408 (GLIYLVLFSFVTALMFSSIVC) form a helical membrane-spanning segment. Residues 409 to 560 (SVPHTWQSKR…AIHRPHSAIH (152 aa)) are Cytoplasmic-facing. 2 disordered regions span residues 415 to 435 (QSKRSEEEDGDETSATLGSRA) and 486 to 560 (TPRC…SAIH). Residues 539–549 (TSRSAPNSRPN) are compositionally biased toward polar residues.

The protein belongs to the tweety family. Homotetramer; disulfide-linked. Forms cis-homodimers in the presence of Ca(2+).

It is found in the cell membrane. It carries out the reaction chloride(in) = chloride(out). It catalyses the reaction L-glutamate(out) = L-glutamate(in). Functionally, may act as a calcium-independent, swelling-dependent volume-regulated anion channel (VRAC-swell) which plays a pivotal role in the process of regulatory volume decrease (RVD) in the brain through the efflux of anions like chloride and organic osmolytes like glutamate. Probable large-conductance Ca(2+)-activated chloride channel. The sequence is that of Protein tweety homolog 3 (ttyh3b) from Danio rerio (Zebrafish).